A 1282-amino-acid chain; its full sequence is Ribosome biogenesis protein BMS1 homolog (1282 aa).

The span at 1–24 (MEAKDQKKHRKKNSGPKAAKKKKR) shows a compositional bias: basic residues. Residues 1–43 (MEAKDQKKHRKKNSGPKAAKKKKRLLQDLQLGDEEDARKRNPK) are disordered. Lys43 participates in a covalent cross-link: Glycyl lysine isopeptide (Lys-Gly) (interchain with G-Cter in SUMO2). One can recognise a Bms1-type G domain in the interval 80–245 (PPPIVVVVMG…GRFITVMKFR (166 aa)). The segment at 89-96 (GPPKVGKS) is G1. 89-96 (GPPKVGKS) contributes to the ATP binding site. Residues 117–121 (PVTIV) are G2. The segment at 132–135 (ECGC) is G3. Positions 184-187 (THLD) are G4. At Ser188 the chain carries Phosphoserine. The segment at 219–228 (LSGMVHGEYQ) is G5. 2 disordered regions span residues 397-557 (DSKP…ANCQ) and 575-667 (PTFD…ALKW). Glycyl lysine isopeptide (Lys-Gly) (interchain with G-Cter in SUMO2) cross-links involve residues Lys399 and Lys415. 2 stretches are compositionally biased toward acidic residues: residues 434–472 (GDED…ENAE) and 503–531 (DSDD…EDCT). Residues 535–550 (KGISGSKAAGEGSKAG) show a composition bias toward low complexity. Ser552 is modified (phosphoserine). Residues 588–610 (FASEDESEESSSLSAEEEDSENE) are compositionally biased toward acidic residues. A phosphoserine mark is found at Ser625 and Ser639. Lys646 is covalently cross-linked (Glycyl lysine isopeptide (Lys-Gly) (interchain with G-Cter in SUMO2)). Over residues 653-667 (EENNDSKETSGALKW) the composition is skewed to basic and acidic residues. Thr708 is subject to Phosphothreonine. 2 disordered regions span residues 787–822 (ETGD…ESAK) and 1178–1202 (NKPK…IREP). Lys810 participates in a covalent cross-link: Glycyl lysine isopeptide (Lys-Gly) (interchain with G-Cter in SUMO1); alternate. Residue Lys810 forms a Glycyl lysine isopeptide (Lys-Gly) (interchain with G-Cter in SUMO2); alternate linkage. Lys1206 is covalently cross-linked (Glycyl lysine isopeptide (Lys-Gly) (interchain with G-Cter in SUMO2)). Positions 1219–1282 (SQKMKKAKEQ…SLKGAEGQLQ (64 aa)) are disordered. Basic and acidic residues predominate over residues 1228 to 1248 (QRHLHNKEHFRAKQKEEEEKL). A compositionally biased stretch (basic residues) spans 1249–1259 (KRQKDLRKKLF).

It belongs to the TRAFAC class translation factor GTPase superfamily. Bms1-like GTPase family. BMS1 subfamily. Part of the small subunit (SSU) processome, composed of more than 70 proteins and the RNA chaperone small nucleolar RNA (snoRNA) U3. Interacts with RCL1.

Its subcellular location is the nucleus. It is found in the nucleolus. It catalyses the reaction GTP + H2O = GDP + phosphate + H(+). Functionally, GTPase required for the synthesis of 40S ribosomal subunits and for processing of pre-ribosomal RNA (pre-rRNA) at sites A0, A1, and A2. Controls access of pre-rRNA intermediates to RCL1 during ribosome biogenesis by binding RCL1 in a GTP-dependent manner, and delivering it to pre-ribosomes. GTP-binding and/or GTP hydrolysis may induce conformational rearrangements within the BMS1-RCL1 complex allowing the interaction of RCL1 with its RNA substrate. Required for RCL1 import into the nucleus. This is Ribosome biogenesis protein BMS1 homolog from Homo sapiens (Human).